A 292-amino-acid polypeptide reads, in one-letter code: Protease HtpX (292 aa).

The next 2 helical transmembrane spans lie at 4–24 and 32–52; these read IILF…ILAV and IYGL…LSLI. His139 contributes to the Zn(2+) binding site. The active site involves Glu140. His143 provides a ligand contact to Zn(2+). 2 helical membrane passes run 150 to 170 and 193 to 213; these read ITMT…SRII and FLFF…ASII. Glu222 is a Zn(2+) binding site.

This sequence belongs to the peptidase M48B family. The cofactor is Zn(2+).

Its subcellular location is the cell membrane. The protein is Protease HtpX of Buchnera aphidicola subsp. Schizaphis graminum (strain Sg).